The sequence spans 195 residues: Probable septum site-determining protein MinC (195 aa).

It belongs to the MinC family. As to quaternary structure, interacts with MinD and FtsZ.

Its function is as follows. Cell division inhibitor that blocks the formation of polar Z ring septums. Rapidly oscillates between the poles of the cell to destabilize FtsZ filaments that have formed before they mature into polar Z rings. Prevents FtsZ polymerization. In Helicobacter pylori (strain P12), this protein is Probable septum site-determining protein MinC.